Consider the following 201-residue polypeptide: 3-isopropylmalate dehydratase small subunit (201 aa).

Belongs to the LeuD family. LeuD type 1 subfamily. In terms of assembly, heterodimer of LeuC and LeuD.

It catalyses the reaction (2R,3S)-3-isopropylmalate = (2S)-2-isopropylmalate. Its pathway is amino-acid biosynthesis; L-leucine biosynthesis; L-leucine from 3-methyl-2-oxobutanoate: step 2/4. In terms of biological role, catalyzes the isomerization between 2-isopropylmalate and 3-isopropylmalate, via the formation of 2-isopropylmaleate. This Roseobacter denitrificans (strain ATCC 33942 / OCh 114) (Erythrobacter sp. (strain OCh 114)) protein is 3-isopropylmalate dehydratase small subunit.